The following is a 166-amino-acid chain: PTS system glucose-specific EIIA component (166 aa).

The PTS EIIA type-1 domain maps to 34-138 (DPVFAQKMMG…SVISPIIITN (105 aa)). Positions 71 and 86 each coordinate Zn(2+). Residue H86 is the Tele-phosphohistidine intermediate; for EIIA activity of the active site. H86 is modified (phosphohistidine; by HPr).

Heterodimer with glycerol kinase (glpk). The cofactor is Zn(2+).

It localises to the cytoplasm. Its function is as follows. The phosphoenolpyruvate-dependent sugar phosphotransferase system (sugar PTS), a major carbohydrate active transport system, catalyzes the phosphorylation of incoming sugar substrates concomitantly with their translocation across the cell membrane. The enzyme II complex composed of PtsG and Crr is involved in glucose transport. The sequence is that of PTS system glucose-specific EIIA component (crr) from Staphylococcus aureus (strain MRSA252).